The primary structure comprises 80 residues: Large ribosomal subunit protein uL24 (80 aa).

It belongs to the universal ribosomal protein uL24 family. Part of the 50S ribosomal subunit.

In terms of biological role, one of two assembly initiator proteins, it binds directly to the 5'-end of the 23S rRNA, where it nucleates assembly of the 50S subunit. Functionally, one of the proteins that surrounds the polypeptide exit tunnel on the outside of the subunit. In Chlorobaculum parvum (strain DSM 263 / NCIMB 8327) (Chlorobium vibrioforme subsp. thiosulfatophilum), this protein is Large ribosomal subunit protein uL24.